Reading from the N-terminus, the 314-residue chain is 1-aminocyclopropane-1-carboxylate oxidase 1 (314 aa).

Positions 153–253 constitute a Fe2OG dioxygenase domain; that stretch reads PNFGTKVSNY…RMSIASFYNP (101 aa). His-177, Asp-179, and His-234 together coordinate Fe cation.

Belongs to the iron/ascorbate-dependent oxidoreductase family. In terms of assembly, monomer. The cofactor is Fe cation.

It catalyses the reaction 1-aminocyclopropane-1-carboxylate + L-ascorbate + O2 = ethene + L-dehydroascorbate + hydrogen cyanide + CO2 + 2 H2O. Its pathway is alkene biosynthesis; ethylene biosynthesis via S-adenosyl-L-methionine; ethylene from S-adenosyl-L-methionine: step 2/2. This Malus domestica (Apple) protein is 1-aminocyclopropane-1-carboxylate oxidase 1.